A 194-amino-acid chain; its full sequence is MKYGFTKEELLVFGKYDPSEVQISDPALESYICLEPKYVPHNHGRHANVPFAKQKVFIVERLINKVMRKGHNTGKKILAYNIVKEAFEIIEKKTKKNPIQVLVDAIINAGPREEVVRLKYGGIAVPKAVDTSSSRRVDIALRNIAEGARRAAFKSKRSIAQCLADEIIAAANNESRSFAVAKKEEVERVAKSAR.

The protein belongs to the universal ribosomal protein uS7 family. As to quaternary structure, part of the 30S ribosomal subunit.

Its function is as follows. One of the primary rRNA binding proteins, it binds directly to 16S rRNA where it nucleates assembly of the head domain of the 30S subunit. Is located at the subunit interface close to the decoding center. The protein is Small ribosomal subunit protein uS7 of Archaeoglobus fulgidus (strain ATCC 49558 / DSM 4304 / JCM 9628 / NBRC 100126 / VC-16).